A 488-amino-acid polypeptide reads, in one-letter code: 3-octaprenyl-4-hydroxybenzoate carboxy-lyase (488 aa).

Asn-172 is a Mn(2+) binding site. Prenylated FMN-binding positions include 175-177, 189-191, and 194-195; these read IYR, RWL, and RG. Mn(2+) is bound at residue Glu-238. The active-site Proton donor is the Asp-287.

The protein belongs to the UbiD family. Homohexamer. The cofactor is prenylated FMN. Mn(2+) serves as cofactor.

The protein resides in the cell membrane. The catalysed reaction is a 4-hydroxy-3-(all-trans-polyprenyl)benzoate + H(+) = a 2-(all-trans-polyprenyl)phenol + CO2. Its pathway is cofactor biosynthesis; ubiquinone biosynthesis. Catalyzes the decarboxylation of 3-octaprenyl-4-hydroxy benzoate to 2-octaprenylphenol, an intermediate step in ubiquinone biosynthesis. This is 3-octaprenyl-4-hydroxybenzoate carboxy-lyase from Legionella pneumophila (strain Paris).